A 134-amino-acid chain; its full sequence is Acyl carrier protein, chloroplastic (134 aa).

A chloroplast-targeting transit peptide spans 1-51 (MATTFSASVSTLATSLATPTRISFQKPALVSRTNLSFNLRRSIPTRLSVSC). Positions 55-130 (PETIEKVSKI…EAAELIEELV (76 aa)) constitute a Carrier domain. At serine 90 the chain carries O-(pantetheine 4'-phosphoryl)serine.

Belongs to the acyl carrier protein (ACP) family. 4'-phosphopantetheine is transferred from CoA to a specific serine of apo-ACP by acpS. This modification is essential for activity because fatty acids are bound in thioester linkage to the sulfhydryl of the prosthetic group. Seed.

The protein localises to the plastid. The protein resides in the chloroplast. The protein operates within lipid metabolism; fatty acid biosynthesis. Carrier of the growing fatty acid chain in fatty acid biosynthesis. This is Acyl carrier protein, chloroplastic (ACL1.A3) from Brassica napus (Rape).